The primary structure comprises 510 residues: GMP synthase [glutamine-hydrolyzing] (510 aa).

Positions 5 to 195 (KILVLDFGGQ…LFKVCGVKGT (191 aa)) constitute a Glutamine amidotransferase type-1 domain. The active-site Nucleophile is C82. Residues H169 and E171 contribute to the active site. The 190-residue stretch at 196–385 (WNMADFINEE…LGLPDEIVWR (190 aa)) folds into the GMPS ATP-PPase domain. Position 223–229 (223–229 (SGGVDSA)) interacts with ATP.

In terms of assembly, homodimer.

The enzyme catalyses XMP + L-glutamine + ATP + H2O = GMP + L-glutamate + AMP + diphosphate + 2 H(+). Its pathway is purine metabolism; GMP biosynthesis; GMP from XMP (L-Gln route): step 1/1. In terms of biological role, catalyzes the synthesis of GMP from XMP. The chain is GMP synthase [glutamine-hydrolyzing] from Halothermothrix orenii (strain H 168 / OCM 544 / DSM 9562).